Consider the following 417-residue polypeptide: MFDESYTIKNFDDVLFKAISDEKRRQEEHIELIASENYVSPRVLEAQGSVLTNKYAEGYPGKRYYGGCEFVDVAEELAISRAKLLFGAHYVNVQPHSGSQANAAVMMALLSPGDTFMGMALPHGGHLTHGSKVNFSGKLYHSVEYGVDSNTGLIDYDALEKLALQHKPKLIIAGFSAYSRILDWARFREIADKVGAYLMADIAHVAGLVAVGLYPSPVPYADVVTTTTHKTLRGPRGGLILCKENEEIEKKLNSSVFPGMQGGPLMHVIAAKAVAFAEALLPEFKTYQQQVLANARTMCSVLQSRGYDIVSGGTDNHLLLVDLINKGITGKEADAALGRANITVNKNSVPNDPRSPFVTSGLRLGTPAATTRGFKEREITLLSNWVADVLDNVHDETNISRVKTQVLLLCREFPVYA.

Residues L121 and 125-127 contribute to the (6S)-5,6,7,8-tetrahydrofolate site; that span reads GHL. K230 is modified (N6-(pyridoxal phosphate)lysine). Residue 355-357 coordinates (6S)-5,6,7,8-tetrahydrofolate; it reads SPF.

This sequence belongs to the SHMT family. As to quaternary structure, homodimer. Requires pyridoxal 5'-phosphate as cofactor.

It is found in the cytoplasm. It carries out the reaction (6R)-5,10-methylene-5,6,7,8-tetrahydrofolate + glycine + H2O = (6S)-5,6,7,8-tetrahydrofolate + L-serine. Its pathway is one-carbon metabolism; tetrahydrofolate interconversion. The protein operates within amino-acid biosynthesis; glycine biosynthesis; glycine from L-serine: step 1/1. In terms of biological role, catalyzes the reversible interconversion of serine and glycine with tetrahydrofolate (THF) serving as the one-carbon carrier. This reaction serves as the major source of one-carbon groups required for the biosynthesis of purines, thymidylate, methionine, and other important biomolecules. Also exhibits THF-independent aldolase activity toward beta-hydroxyamino acids, producing glycine and aldehydes, via a retro-aldol mechanism. This is Serine hydroxymethyltransferase from Legionella pneumophila (strain Corby).